The primary structure comprises 123 residues: Small ribosomal subunit protein uS13 (123 aa).

Residues 95–123 form a disordered region; sequence GLPVRGQKTKTNARTRKGPKRTVGRKKKK. Over residues 101 to 123 the composition is skewed to basic residues; the sequence is QKTKTNARTRKGPKRTVGRKKKK.

Belongs to the universal ribosomal protein uS13 family. In terms of assembly, part of the 30S ribosomal subunit. Forms a loose heterodimer with protein S19. Forms two bridges to the 50S subunit in the 70S ribosome.

In terms of biological role, located at the top of the head of the 30S subunit, it contacts several helices of the 16S rRNA. In the 70S ribosome it contacts the 23S rRNA (bridge B1a) and protein L5 of the 50S subunit (bridge B1b), connecting the 2 subunits; these bridges are implicated in subunit movement. Contacts the tRNAs in the A and P-sites. The protein is Small ribosomal subunit protein uS13 of Alkaliphilus metalliredigens (strain QYMF).